Reading from the N-terminus, the 136-residue chain is Small ribosomal subunit protein uS19 (136 aa).

The disordered stretch occupies residues Arg-114–Lys-136.

This sequence belongs to the universal ribosomal protein uS19 family.

Its function is as follows. Protein S19 forms a complex with S13 that binds strongly to the 16S ribosomal RNA. The polypeptide is Small ribosomal subunit protein uS19 (Methanosarcina barkeri (strain Fusaro / DSM 804)).